The following is a 226-amino-acid chain: Large ribosomal subunit protein uL1 (226 aa).

This sequence belongs to the universal ribosomal protein uL1 family. In terms of assembly, part of the 50S ribosomal subunit.

In terms of biological role, binds directly to 23S rRNA. The L1 stalk is quite mobile in the ribosome, and is involved in E site tRNA release. Its function is as follows. Protein L1 is also a translational repressor protein, it controls the translation of the L11 operon by binding to its mRNA. The chain is Large ribosomal subunit protein uL1 from Borreliella afzelii (strain PKo) (Borrelia afzelii).